A 225-amino-acid polypeptide reads, in one-letter code: MSARIGVITFPGTLDDVDAVRAVRLAGAEAVNLWHADADLKQVDAVIVPGGFSYGDYLRAGAIARFAPVMGEVVRAAEQGMPVLGICNGFQVLCEAGLLPGALTRNEGLHFICRDQWLTVESVSTAWTSRYEPGAQILIPLKSGEGRYQAAPAVLDELEGEGRVVFRYSGDNPNGSQRGIAGISSANGRVVGLMPHPEHATEALTGPSDDGLGLFLSVLDTLVTA.

A Glutamine amidotransferase type-1 domain is found at 4-225 (RIGVITFPGT…LSVLDTLVTA (222 aa)). Catalysis depends on C87, which acts as the Nucleophile. Catalysis depends on residues H196 and E198.

As to quaternary structure, part of the FGAM synthase complex composed of 1 PurL, 1 PurQ and 2 PurS subunits.

Its subcellular location is the cytoplasm. The catalysed reaction is N(2)-formyl-N(1)-(5-phospho-beta-D-ribosyl)glycinamide + L-glutamine + ATP + H2O = 2-formamido-N(1)-(5-O-phospho-beta-D-ribosyl)acetamidine + L-glutamate + ADP + phosphate + H(+). The enzyme catalyses L-glutamine + H2O = L-glutamate + NH4(+). The protein operates within purine metabolism; IMP biosynthesis via de novo pathway; 5-amino-1-(5-phospho-D-ribosyl)imidazole from N(2)-formyl-N(1)-(5-phospho-D-ribosyl)glycinamide: step 1/2. In terms of biological role, part of the phosphoribosylformylglycinamidine synthase complex involved in the purines biosynthetic pathway. Catalyzes the ATP-dependent conversion of formylglycinamide ribonucleotide (FGAR) and glutamine to yield formylglycinamidine ribonucleotide (FGAM) and glutamate. The FGAM synthase complex is composed of three subunits. PurQ produces an ammonia molecule by converting glutamine to glutamate. PurL transfers the ammonia molecule to FGAR to form FGAM in an ATP-dependent manner. PurS interacts with PurQ and PurL and is thought to assist in the transfer of the ammonia molecule from PurQ to PurL. The polypeptide is Phosphoribosylformylglycinamidine synthase subunit PurQ (Nocardia farcinica (strain IFM 10152)).